Here is a 285-residue protein sequence, read N- to C-terminus: (3S)-malyl-CoA thioesterase (285 aa).

Residues arginine 70 and glutamate 122 each coordinate substrate. The Mg(2+) site is built by glutamate 122 and aspartate 148.

Belongs to the HpcH/HpaI aldolase family. In terms of assembly, homodimer or homotrimer. It depends on Mg(2+) as a cofactor.

The catalysed reaction is (S)-malyl-CoA + H2O = (S)-malate + CoA + H(+). Its activity is regulated as follows. Reversibly inhibited by EDTA. Stimulated by the divalent cations Mg(2+) and Mn(2+). In terms of biological role, catalyzes the hydrolysis of (3S)-malyl-CoA to (3S)-malate and free CoA. Inactive towards beta-methylmalyl-CoA and other CoA esters. The polypeptide is (3S)-malyl-CoA thioesterase (Cereibacter sphaeroides (strain ATCC 17023 / DSM 158 / JCM 6121 / CCUG 31486 / LMG 2827 / NBRC 12203 / NCIMB 8253 / ATH 2.4.1.) (Rhodobacter sphaeroides)).